The chain runs to 336 residues: tRNA N6-adenosine threonylcarbamoyltransferase (336 aa).

Fe cation contacts are provided by His114 and His118. Substrate is bound by residues 136-140, Asp169, Gly182, Asp186, and Asn275; that span reads LVSGG. Residue Asp302 participates in Fe cation binding.

The protein belongs to the KAE1 / TsaD family. The cofactor is Fe(2+).

Its subcellular location is the cytoplasm. The catalysed reaction is L-threonylcarbamoyladenylate + adenosine(37) in tRNA = N(6)-L-threonylcarbamoyladenosine(37) in tRNA + AMP + H(+). Functionally, required for the formation of a threonylcarbamoyl group on adenosine at position 37 (t(6)A37) in tRNAs that read codons beginning with adenine. Is involved in the transfer of the threonylcarbamoyl moiety of threonylcarbamoyl-AMP (TC-AMP) to the N6 group of A37, together with TsaE and TsaB. TsaD likely plays a direct catalytic role in this reaction. The polypeptide is tRNA N6-adenosine threonylcarbamoyltransferase (Streptococcus agalactiae serotype III (strain NEM316)).